The sequence spans 740 residues: Zn(2)-C6 fungal-type transcription factor mpsB (740 aa).

The zn(2)-C6 fungal-type DNA-binding region spans 25–46 (RLKCDRNQPCSTCSHRGLSFSC). The disordered stretch occupies residues 625–645 (SISTPSHDQDDLDGEAATEAT).

The protein resides in the nucleus. Its function is as follows. Transcription factor; part of the gene cluster that mediates the biosynthesis of macrophasetins, 3-decalinoyltetramic acids (DTAs) which feature a tetramate (pyrrolidine-2,4-dione) unit connected to a decalin fragment and that have potent bioactivities. The chain is Zn(2)-C6 fungal-type transcription factor mpsB from Macrophomina phaseolina (strain MS6) (Charcoal rot fungus).